Consider the following 1264-residue polypeptide: Valine--tRNA ligase (1264 aa).

Serine 2 bears the N-acetylserine mark. Positions 89 to 219 (GSRAAVLVQQ…YSGARPLSHQ (131 aa)) constitute a GST C-terminal domain. Residues 217-296 (SHQPGPEAPA…GEKKDVSGPM (80 aa)) form a disordered region. Composition is skewed to basic and acidic residues over residues 234 to 248 (LKKEAKKREKLEKFQ) and 261 to 275 (GEKKPKPEKREKRDP). The 'HIGH' region motif lies at 344 to 354 (PNVTGSLHLGH). Serine 437 and serine 527 each carry phosphoserine. Position 645 is an N6-acetyllysine (lysine 645). The 'KMSKS' region motif lies at 862-866 (KMSKS). Lysine 865 contributes to the ATP binding site.

It belongs to the class-I aminoacyl-tRNA synthetase family. In terms of assembly, forms high-molecular-mass aggregates with elongation factor 1.

The catalysed reaction is tRNA(Val) + L-valine + ATP = L-valyl-tRNA(Val) + AMP + diphosphate. With respect to regulation, can be regulated by protein kinase C-dependent phosphorylation. In terms of biological role, catalyzes the attachment of valine to tRNA(Val). The protein is Valine--tRNA ligase of Homo sapiens (Human).